The sequence spans 274 residues: Guanylyl cyclase 1 (274 aa).

In terms of assembly, functions both as monomer and homooligomer. Mg(2+) is required as a cofactor.

It carries out the reaction GTP = 3',5'-cyclic GMP + diphosphate. Its pathway is nucleotide metabolism. Its function is as follows. Magnesium-dependent guanylyl cyclase that catalyzes the formation of guanosine 3',5'-cyclic monophosphate (cGMP) from guanosine 5'-triphosphate (GTP). Can also use ATP as substrate with a low activity. The chain is Guanylyl cyclase 1 from Arabidopsis thaliana (Mouse-ear cress).